The chain runs to 435 residues: Histidine--tRNA ligase (435 aa).

Belongs to the class-II aminoacyl-tRNA synthetase family. Homodimer.

The protein localises to the cytoplasm. It carries out the reaction tRNA(His) + L-histidine + ATP = L-histidyl-tRNA(His) + AMP + diphosphate + H(+). The polypeptide is Histidine--tRNA ligase (Synechococcus elongatus (strain ATCC 33912 / PCC 7942 / FACHB-805) (Anacystis nidulans R2)).